We begin with the raw amino-acid sequence, 461 residues long: Serine incorporator 5 (461 aa).

Residues 1 to 36 (MSARCCAGQLACCCGSAGCSLCCGCCPKFRQSRTTR) are Extracellular-facing. A helical transmembrane segment spans residues 37 to 57 (FMYLFYFILVIALCCVMMTPS). Residues 58–90 (VMKQVKDHIPFFEEFCKKTQAGGDACENLVGYS) lie on the Cytoplasmic side of the membrane. The chain crosses the membrane as a helical span at residues 91–111 (AVYRVCFGMACFFALFCLLTL). Over 112-125 (KVNNSKSCRAYIHN) the chain is Extracellular. The N-linked (GlcNAc...) asparagine glycan is linked to Asn114. Residues 126 to 146 (GFWFFKLLLLGAMCSGAFFIP) form a helical membrane-spanning segment. Over 147 to 157 (DQETFLKVWRY) the chain is Cytoplasmic. A helical transmembrane segment spans residues 158 to 178 (VGAGGSFLFICIQLLLIVQFA). The Extracellular segment spans residues 179-200 (HKWNKNWTAGTVRNKLWYASLS). Residue Asn184 is glycosylated (N-linked (GlcNAc...) asparagine). Residues 201–221 (LVTLIMYSVAVGGLALMAVFY) traverse the membrane as a helical segment. Residues 222–231 (TQWDDCMDNK) lie on the Cytoplasmic side of the membrane. A helical transmembrane segment spans residues 232-252 (ILLGVHGGLCVLISLVAISPC). Residues 253–260 (VQNRQPHS) are Extracellular-facing. The helical transmembrane segment at 261 to 281 (GLLQSGLISCYVTYLTFSALT) threads the bilayer. The Cytoplasmic segment spans residues 282–312 (SKPEKKVLDEHGKNVTICAPDFGQDLHRDEN). The helical transmembrane segment at 313–333 (MVTWLGTLLLIVCISYSCLTS) threads the bilayer. The Extracellular segment spans residues 334-392 (TTRSSSDALQSRYGAPELEVARCCFCFGPDGEDTEEQQNVKKGPRVIYDEKKGTVYSYS). Residues 393-413 (YFHFVFFLASLYVMMTLTSWF) traverse the membrane as a helical segment. The Cytoplasmic portion of the chain corresponds to 414–422 (HYENATIKT). A helical transmembrane segment spans residues 423 to 443 (FFSGWSVFWVKMASCWMCVLL). Topologically, residues 444–461 (YLQTLVAPLCCPSRQFSV) are extracellular.

Belongs to the TDE1 family.

The protein localises to the cell membrane. The enzyme catalyses a 1,2-diacyl-sn-glycero-3-phospho-L-serine(in) = a 1,2-diacyl-sn-glycero-3-phospho-L-serine(out). The catalysed reaction is a 1,2-diacyl-sn-glycero-3-phosphocholine(in) = a 1,2-diacyl-sn-glycero-3-phosphocholine(out). It carries out the reaction a 1,2-diacyl-sn-glycero-3-phosphoethanolamine(in) = a 1,2-diacyl-sn-glycero-3-phosphoethanolamine(out). In terms of biological role, restriction factor required to restrict infectivity of gammaretroviruses: acts by inhibiting an early step of viral infection. Impairs the penetration of the viral particle into the cytoplasm. Non-ATP-dependent, non-specific lipid transporter for phosphatidylserine, phosphatidylcholine, and phosphatidylethanolamine. Functions as a scramblase that flips lipids in both directions across the membrane. Phospholipid scrambling results in gammaretroviral surface exposure of phosphatidylserine and loss of membrane asymmetry, which leads to loss of infectivity. Enhances the incorporation of serine into phosphatidylserine and sphingolipids. May play a role in providing serine molecules for the formation of myelin glycosphingolipids in oligodendrocytes. The chain is Serine incorporator 5 (Serinc5) from Mus musculus (Mouse).